Reading from the N-terminus, the 563-residue chain is Arginine--tRNA ligase (563 aa).

The 'HIGH' region motif lies at 121–131; sequence PNIAKPFSIGH.

Belongs to the class-I aminoacyl-tRNA synthetase family. As to quaternary structure, monomer.

The protein resides in the cytoplasm. The enzyme catalyses tRNA(Arg) + L-arginine + ATP = L-arginyl-tRNA(Arg) + AMP + diphosphate. This chain is Arginine--tRNA ligase, found in Streptococcus pyogenes serotype M6 (strain ATCC BAA-946 / MGAS10394).